Consider the following 553-residue polypeptide: Thioredoxin domain-containing protein 2 (553 aa).

Disordered stretches follow at residues 1-37 (MDVDKELGMESVKAGASGKPEMRLGTQEETSEGDANE) and 77-442 (TEES…EETM). Over residues 99–143 (PKQDDSPKSSEETIQPKEGDIPKAPEETIQSKKEDLPKSSEKAIQ) the composition is skewed to basic and acidic residues. Tandem repeats lie at residues 113–127 (QPKEGDIPKAPEETI), 128–142 (QSKKEDLPKSSEKAI), 143–157 (QPKESNIPKSSAKPI), 158–172 (QPKLGNIPKASVKPS), 173–187 (QPKEGDIPKAPEETI), 188–202 (QSKKEDLPKSSEEAI), 203–217 (QPKEGDIPKSSAKPI), 218–232 (QPKLGNIAKTSVKPS), 233–247 (QPKESDIPKSPEETI), 248–262 (QPKEGDIPKSSAKPI), 263–277 (QPKLGNIPKASVKPS), 278–292 (QPKEGDISKSPEEAI), 293–307 (QPKEGDLPKSLEEAI), 308–322 (QPKEGDIPKSPEEAI), 323–337 (QPKEGDIPKSLEEAI), 338–352 (QPKEGDIPKSPEETI), 353–367 (QPKKGDIPKSPEEAI), 368–382 (QPKEGDIPKSPKQAI), 383–397 (QPKEGDIPKSLEEAI), 398–412 (PPKEIDIPKSPEETI), 413–427 (QPKEDDSPKSLEEAT), and 428–442 (PSKEGDILKPEEETM). Residues 113–442 (QPKEGDIPKA…DILKPEEETM (330 aa)) form a 22 X 15 AA approximate tandem repeat of Q-P-K-X-G-D-I-P-K-S-[PS]-E-[KE]-X-I region. Residues 173-209 (QPKEGDIPKAPEETIQSKKEDLPKSSEEAIQPKEGDI) are compositionally biased toward basic and acidic residues. A compositionally biased stretch (basic and acidic residues) spans 233 to 254 (QPKESDIPKSPEETIQPKEGDI). Basic and acidic residues-rich tracts occupy residues 278-376 (QPKE…DIPK) and 385-439 (KEGD…KPEE). Serine 362 is modified (phosphoserine). Phosphoserine is present on serine 392. Positions 429–553 (SKEGDILKPE…KLEAVIAELK (125 aa)) constitute a Thioredoxin domain. Cysteine 480 and cysteine 483 are joined by a disulfide.

Testis-specific. Only expressed during spermiogenesis, prominently in round and elongating spermatids.

The protein resides in the cytoplasm. In terms of biological role, probably plays a regulatory role in sperm development. May participate in regulation of fibrous sheath (FS) assembly by supporting the formation of disulfide bonds during sperm tail morphogenesis. May also be required to rectify incorrect disulfide pairing and generate suitable pairs between the FS constituents. Can reduce disulfide bonds in vitro in the presence of NADP and thioredoxin reductase. In Homo sapiens (Human), this protein is Thioredoxin domain-containing protein 2 (TXNDC2).